Reading from the N-terminus, the 61-residue chain is Large ribosomal subunit protein uL30 (61 aa).

The protein belongs to the universal ribosomal protein uL30 family. Part of the 50S ribosomal subunit.

In Colwellia psychrerythraea (strain 34H / ATCC BAA-681) (Vibrio psychroerythus), this protein is Large ribosomal subunit protein uL30.